We begin with the raw amino-acid sequence, 403 residues long: Poly(rC)-binding protein 4 (403 aa).

3 KH domains span residues 17-67, 101-154, and 241-293; these read TLTL…TITG, PVTL…TVSG, and TSSQ…TITG.

As to expression, widely expressed, with highest levels in testis and lowest in heart.

It localises to the cytoplasm. Single-stranded nucleic acid binding protein that binds preferentially to oligo dC. In Mus musculus (Mouse), this protein is Poly(rC)-binding protein 4 (Pcbp4).